The chain runs to 65 residues: Large ribosomal subunit protein bL31 (65 aa).

Residues Cys-16, Cys-18, Cys-36, and Cys-39 each contribute to the Zn(2+) site.

This sequence belongs to the bacterial ribosomal protein bL31 family. Type A subfamily. In terms of assembly, part of the 50S ribosomal subunit. Zn(2+) is required as a cofactor.

In terms of biological role, binds the 23S rRNA. The sequence is that of Large ribosomal subunit protein bL31 from Geotalea daltonii (strain DSM 22248 / JCM 15807 / FRC-32) (Geobacter daltonii).